Here is a 1700-residue protein sequence, read N- to C-terminus: MELSCSEVPLYGQKTVYAKFGKNVYLPEDAEFYFVYGGSHQRHVVIADRVQDNVLQSSIPGHWLQETVTVSVCLCSEGYSPVTMGSGSVTYVDNMACRLARLLVTQADRLTACSHQTLLTPFALTVEALPALDEELVLALTQLELPLGWTVLGNSSLEVSLHRESLLHLAVRWALPKLFHFLLCLPGGVKALKLPNEEATTPLDLALQGGHSTLVEDITNFQGSHSPGFSRLRLNEEATLQFVHSSETLTLTVNHTAEHLLEADIKLFRKYFWDRAFLVKALEQEAKTEKATMPSGAAETEEEVRNLESGRSPSEEEEDAKSIKSQVDGPSEHEDQDRLPLDRSFDGLKKSKHVPASLAAGQLSDVLNGGDEVYANCMVIDQVGDLDINYINLEGLSTHTSPESGRSMLGPQACMHTLPPDTSPCGRPLIENSEGTLDAAASQSFVTPSSSRTSNLNLSFGLHGFEKEQSHLKKRSSSLDALVADSEGEGGSEPPICYAVGSQSSPRTGLPSGDELDSFETNTEPDCNISRTESLSLSSTLHSKESLLSGIRSRSYSCSSPKISSGKSRLVRDFTVCSTSEEQRSYSFQEPPGEKRIQEEEWDEYVIPAKSESEKYKVSRTFSFLMNRMTSPRNKSKMKNKDTKEKEKMNRHQFVPGTFSGVLQCSGCDKTLLGKESLQCANCKANTHKGCKDAVPPCTKKFQEKYNKNKPQSILGSSSVRDVPAPGLSLHPSSSMPIGLPAGRKEFAAQVHPLSRSVPGTTLESFRRAVTSLESEGDSWRSRSHSDELFQSMGSSPSTESFMMEDVVDSSLWIDLSSDAQEFEAESWSLVVDPSFCSRQEKDVIKRQDVIFELMQTEVHHIQTLLIMSEVFRKGMKEELQLDHSTVDKIFPCLDELLETHRHFFFSMKERRQESCAGSDRNFVINQIGDILVQQFSEENASKMKRIYGEFCSHHKEAMSLFKELQQNKKFQNFIKIRNSNLLARRRGIPECILLVTQRITKYPVLVERILQYTKERTEEHRDLCKALGLIKDMIAAVDLKVSEYEKNQKWLEILNKIENKTYTKLKNGHVFRKQALLSQERALLHDGLVYWKTATGRFKDILALLLTDVLLFLQEKDQKYIFAAVDQKPSVISLQKLIAREVANEERGMFLISASSAGPEMYEIHTNSKEERNNWMRRIQQAVESCPEEEGGRTSESDEERRKAEARVAKIQQCQEILSNQDQQICTYLEEKLHIYAELGELSGFEDVHLEPHLLIKPDPGEPPQAASLLAAALREAESLQVAVKASKMGDVSQSSEESPGGTVLMDTPSTQDVPASPTASLVTEGTEGRGCWDVDPGLQGVVTDLAVSDAGEKVEYRSFSGSSQSEIIQAIQNLTRLLYSLQAALTIQDSHIEIHKLVLQQRESLAPSHSFRGGPLQDQEKSRYLEKQREELANIHKLQHQFQQEQRRWHRTCDQQQREQEAQESWLQARERECQSQEELLLRHRSELDHQLQEYQQSLERLREGQRMVERERQKMRVQQGLLGHCKHSRQRSLPAVFSPGSKEVTELNRAESLCHENSFFINEAFGHMSLNTSNKPNPSGVPWDAHPLEGSHFDLARTSESPTELKIDISQPPDVNSELWTTGPGHQRPALQENSKESYKNVADLDSFQSESSSPQDSNQRGPQPQTLTTEAKLSLPMAAGHGGDAGDGAEENILYL.

The segment at 288 to 343 (TEKATMPSGAAETEEEVRNLESGRSPSEEEEDAKSIKSQVDGPSEHEDQDRLPLDR) is disordered. 2 positions are modified to phosphoserine: S312 and S314. The segment covering 330–343 (PSEHEDQDRLPLDR) has biased composition (basic and acidic residues). A Phosphoserine modification is found at S478. A disordered region spans residues 483–532 (VADSEGEGGSEPPICYAVGSQSSPRTGLPSGDELDSFETNTEPDCNISRT). S623 is modified (phosphoserine). A Phorbol-ester/DAG-type zinc finger spans residues 651–698 (RHQFVPGTFSGVLQCSGCDKTLLGKESLQCANCKANTHKGCKDAVPPC). The DH domain occupies 846-1041 (KRQDVIFELM…KDMIAAVDLK (196 aa)). One can recognise a PH domain in the interval 1095–1184 (ATGRFKDILA…NWMRRIQQAV (90 aa)). Disordered regions lie at residues 1184–1205 (VESCPEEEGGRTSESDEERRKA) and 1289–1328 (KMGDVSQSSEESPGGTVLMDTPSTQDVPASPTASLVTEGT). The span at 1191 to 1205 (EGGRTSESDEERRKA) shows a compositional bias: basic and acidic residues. Residues 1292 to 1301 (DVSQSSEESP) are interaction with PTK2/FAK1; required for regulation of axonal branching and synapse formation. The segment covering 1309–1325 (TPSTQDVPASPTASLVT) has biased composition (polar residues). The tract at residues 1369–1380 (IIQAIQNLTRLL) is mediates cytoplasmic retention and interaction with YWHAH. Positions 1421-1522 (QEKSRYLEKQ…RERQKMRVQQ (102 aa)) form a coiled coil. The segment at 1421 to 1700 (QEKSRYLEKQ…DGAEENILYL (280 aa)) is interaction with microtubules. The segment at 1493–1524 (QLQEYQQSLERLREGQRMVERERQKMRVQQGL) is RNA-binding. Position 1535 is a phosphoserine (S1535). The interval 1563–1576 (FINEAFGHMSLNTS) is mediates cytoplasmic retention and interaction with MAPK8IP1. Residues 1602-1700 (SESPTELKID…DGAEENILYL (99 aa)) form a disordered region. Phosphoserine is present on S1604. Residues 1647–1663 (DLDSFQSESSSPQDSNQ) are compositionally biased toward low complexity. Residues 1664–1675 (RGPQPQTLTTEA) are compositionally biased toward polar residues.

As to quaternary structure, homooligomer; forms some cytoplasmic aggregates. Forms a complex with MAPK8 and MAPK8IP1. Interacts with RHOA. Interacts with microtubules. Interacts with YWHAE and YWHAH. Interacts with PTK2/FAK1. Interacts with NEFL. Interacts with CTNND2; prevents interaction with RHOA. Phosphorylated on tyrosine upon stimulation of cells by laminin. Highly enriched in the brain (at protein level). Also detected in lung and kidney.

It localises to the cytoplasm. The protein localises to the cell membrane. In terms of biological role, functions as a RHOA-specific guanine nucleotide exchange factor regulating signaling pathways downstream of integrins and growth factor receptors. Functions in axonal branching, synapse formation and dendritic morphogenesis. Also functions in focal adhesion formation, cell motility and B-lymphocytes activation. May regulate NEFL expression and aggregation and play a role in apoptosis. This Mus musculus (Mouse) protein is Rho guanine nucleotide exchange factor 28 (Arhgef28).